A 79-amino-acid polypeptide reads, in one-letter code: Sec-independent protein translocase protein TatA (79 aa).

Residues 1–21 (MGSLSIWHWIVVIAVILLLFG) traverse the membrane as a helical segment. Basic and acidic residues predominate over residues 43–60 (MQDDEKTAEKPEPVKTID). Positions 43–79 (MQDDEKTAEKPEPVKTIDHNAPAPGASRSDVGSKTTV) are disordered.

It belongs to the TatA/E family. As to quaternary structure, the Tat system comprises two distinct complexes: a TatABC complex, containing multiple copies of TatA, TatB and TatC subunits, and a separate TatA complex, containing only TatA subunits. Substrates initially bind to the TatABC complex, which probably triggers association of the separate TatA complex to form the active translocon.

The protein resides in the cell inner membrane. Part of the twin-arginine translocation (Tat) system that transports large folded proteins containing a characteristic twin-arginine motif in their signal peptide across membranes. TatA could form the protein-conducting channel of the Tat system. The chain is Sec-independent protein translocase protein TatA from Nitrobacter hamburgensis (strain DSM 10229 / NCIMB 13809 / X14).